The primary structure comprises 230 residues: uncharacterized protein (230 aa).

This is an uncharacterized protein from Encephalitozoon cuniculi (strain GB-M1) (Microsporidian parasite).